We begin with the raw amino-acid sequence, 157 residues long: 2-C-methyl-D-erythritol 2,4-cyclodiphosphate synthase (157 aa).

A divalent metal cation is bound by residues Asp8 and His10. Residues 8–10 (DVH) and 34–35 (HS) contribute to the 4-CDP-2-C-methyl-D-erythritol 2-phosphate site. His42 is an a divalent metal cation binding site. Residues 56–58 (DIG), 61–65 (FPDTD), 100–106 (AQAPKMA), 132–135 (TTTE), Phe139, and Arg142 contribute to the 4-CDP-2-C-methyl-D-erythritol 2-phosphate site.

Belongs to the IspF family. As to quaternary structure, homotrimer. It depends on a divalent metal cation as a cofactor.

It carries out the reaction 4-CDP-2-C-methyl-D-erythritol 2-phosphate = 2-C-methyl-D-erythritol 2,4-cyclic diphosphate + CMP. It participates in isoprenoid biosynthesis; isopentenyl diphosphate biosynthesis via DXP pathway; isopentenyl diphosphate from 1-deoxy-D-xylulose 5-phosphate: step 4/6. Functionally, involved in the biosynthesis of isopentenyl diphosphate (IPP) and dimethylallyl diphosphate (DMAPP), two major building blocks of isoprenoid compounds. Catalyzes the conversion of 4-diphosphocytidyl-2-C-methyl-D-erythritol 2-phosphate (CDP-ME2P) to 2-C-methyl-D-erythritol 2,4-cyclodiphosphate (ME-CPP) with a corresponding release of cytidine 5-monophosphate (CMP). The polypeptide is 2-C-methyl-D-erythritol 2,4-cyclodiphosphate synthase (Pseudomonas putida (strain ATCC 700007 / DSM 6899 / JCM 31910 / BCRC 17059 / LMG 24140 / F1)).